The following is an 89-amino-acid chain: Small ribosomal subunit protein uS15 (89 aa).

The protein belongs to the universal ribosomal protein uS15 family. As to quaternary structure, part of the 30S ribosomal subunit. Forms a bridge to the 50S subunit in the 70S ribosome, contacting the 23S rRNA.

Its function is as follows. One of the primary rRNA binding proteins, it binds directly to 16S rRNA where it helps nucleate assembly of the platform of the 30S subunit by binding and bridging several RNA helices of the 16S rRNA. Forms an intersubunit bridge (bridge B4) with the 23S rRNA of the 50S subunit in the ribosome. This chain is Small ribosomal subunit protein uS15, found in Leuconostoc mesenteroides subsp. mesenteroides (strain ATCC 8293 / DSM 20343 / BCRC 11652 / CCM 1803 / JCM 6124 / NCDO 523 / NBRC 100496 / NCIMB 8023 / NCTC 12954 / NRRL B-1118 / 37Y).